The sequence spans 491 residues: Nicotinamide phosphoribosyltransferase (491 aa).

Methionine 1 is subject to N-acetylmethionine. Phosphotyrosine is present on tyrosine 188. Arginine 196 is a diphosphate binding site. Aspartate 219 provides a ligand contact to beta-nicotinamide D-ribonucleotide. Residues histidine 247 and arginine 311 each contribute to the diphosphate site. Beta-nicotinamide D-ribonucleotide contacts are provided by residues 311–313 (RPD), 353–354 (GD), glycine 384, and arginine 392. Serine 472 carries the post-translational modification Phosphoserine.

Belongs to the NAPRTase family. Homodimer.

Its subcellular location is the nucleus. The protein resides in the cytoplasm. The protein localises to the secreted. It carries out the reaction beta-nicotinamide D-ribonucleotide + diphosphate = 5-phospho-alpha-D-ribose 1-diphosphate + nicotinamide + H(+). Its pathway is cofactor biosynthesis; NAD(+) biosynthesis; nicotinamide D-ribonucleotide from 5-phospho-alpha-D-ribose 1-diphosphate and nicotinamide: step 1/1. Its function is as follows. Catalyzes the condensation of nicotinamide with 5-phosphoribosyl-1-pyrophosphate to yield nicotinamide mononucleotide, an intermediate in the biosynthesis of NAD. It is the rate limiting component in the mammalian NAD biosynthesis pathway. The secreted form behaves both as a cytokine with immunomodulating properties and an adipokine with anti-diabetic properties, it has no enzymatic activity, partly because of lack of activation by ATP, which has a low level in extracellular space and plasma. Plays a role in the modulation of circadian clock function. Plays a role in the modulation of circadian clock function. NAMPT-dependent oscillatory production of NAD regulates oscillation of clock target gene expression by releasing the core clock component: CLOCK-BMAL1 heterodimer from NAD-dependent SIRT1-mediated suppression. This is Nicotinamide phosphoribosyltransferase (NAMPT) from Sus scrofa (Pig).